The following is a 242-amino-acid chain: Lactate utilization protein A 1 (242 aa).

It belongs to the LutA/YkgE family.

Its function is as follows. Is involved in L-lactate degradation and allows cells to grow with lactate as the sole carbon source. The sequence is that of Lactate utilization protein A 1 from Bacillus anthracis (strain CDC 684 / NRRL 3495).